The chain runs to 708 residues: ATP-dependent DNA helicase Hel308 (708 aa).

The short motif at 1 to 29 (MSIDDLKLPSNVIDIIKNRGIKKLNPPQT) is the Q motif element. ATP contacts are provided by residues Q28 and 46–53 (SPTGSGKT). The Helicase ATP-binding domain maps to 33–196 (KKGLLDGNRL…WLGAEPVATN (164 aa)). The DEAH box motif lies at 145 to 148 (DELH). The Helicase C-terminal domain maps to 229 to 435 (HGDDAIIAYT…ERAFYTFLLG (207 aa)).

The protein belongs to the helicase family. Hel308 subfamily. Monomer.

The enzyme catalyses Couples ATP hydrolysis with the unwinding of duplex DNA by translocating in the 3'-5' direction.. The catalysed reaction is ATP + H2O = ADP + phosphate + H(+). Functionally, DNA-dependent ATPase and 3'-5' DNA helicase that may be involved in repair of stalled replication forks. The chain is ATP-dependent DNA helicase Hel308 from Saccharolobus solfataricus (strain ATCC 35092 / DSM 1617 / JCM 11322 / P2) (Sulfolobus solfataricus).